We begin with the raw amino-acid sequence, 499 residues long: Lysine--tRNA ligase (499 aa).

2 residues coordinate Mg(2+): Glu-408 and Glu-415.

It belongs to the class-II aminoacyl-tRNA synthetase family. In terms of assembly, homodimer. It depends on Mg(2+) as a cofactor.

Its subcellular location is the cytoplasm. It carries out the reaction tRNA(Lys) + L-lysine + ATP = L-lysyl-tRNA(Lys) + AMP + diphosphate. In Bacillus thuringiensis (strain Al Hakam), this protein is Lysine--tRNA ligase.